Consider the following 934-residue polypeptide: Desmocollin 2-like protein (934 aa).

4 consecutive Cadherin domains span residues 167–274 (RWRP…APEF), 274–381 (FTGN…PPTF), 382–494 (KEKL…GPEF), and 495–600 (NPNI…IPVI). Topologically, residues 167-716 (RWRPLPFSVV…SASVSLGNYG (550 aa)) are extracellular. N-linked (GlcNAc...) asparagine glycosylation is found at Asn197, Asn296, and Asn316. N-linked (GlcNAc...) asparagine glycosylation is found at Asn509, Asn565, and Asn569. The chain crosses the membrane as a helical span at residues 717 to 737 (ILALVLSGLLLLLLCLFLIFF). Over 738-934 (CTTKRDKLQI…ICYTTNKTGK (197 aa)) the chain is Cytoplasmic.

Expressed at low levels in the brain and heart.

The protein resides in the cell junction. Its subcellular location is the desmosome. It localises to the cell membrane. In terms of biological role, a component of desmosome cell-cell junctions which are required for positive regulation of cellular adhesion. Involved in the interaction of plaque proteins and intermediate filaments mediating cell-cell adhesion. Involved in the formation and structural organization of desmosome cell-cell junctions during embryonic development. Required for embryogenesis, specifically for progression of epiboly and normal convergence-extension movements during gastrulation. Required for the development of desmosomal-rich midlines in the heart. Plays an important role in ventricular contraction and resulting heart stroke volume. The sequence is that of Desmocollin 2-like protein from Danio rerio (Zebrafish).